Consider the following 787-residue polypeptide: Endonuclease MutS2 (787 aa).

336-343 lines the ATP pocket; it reads GPNTGGKT. The Smr domain maps to 712-787; sequence LDLRGVRYED…GNGATEVQFK (76 aa).

It belongs to the DNA mismatch repair MutS family. MutS2 subfamily. Homodimer. Binds to stalled ribosomes, contacting rRNA.

Functionally, endonuclease that is involved in the suppression of homologous recombination and thus may have a key role in the control of bacterial genetic diversity. In terms of biological role, acts as a ribosome collision sensor, splitting the ribosome into its 2 subunits. Detects stalled/collided 70S ribosomes which it binds and splits by an ATP-hydrolysis driven conformational change. Acts upstream of the ribosome quality control system (RQC), a ribosome-associated complex that mediates the extraction of incompletely synthesized nascent chains from stalled ribosomes and their subsequent degradation. Probably generates substrates for RQC. The protein is Endonuclease MutS2 of Lactiplantibacillus plantarum (strain ATCC BAA-793 / NCIMB 8826 / WCFS1) (Lactobacillus plantarum).